A 297-amino-acid chain; its full sequence is Adrenocorticotropic hormone receptor (297 aa).

The Extracellular segment spans residues 1–23 (MKHIIHASGNVNGTARNNSDCPH). N-linked (GlcNAc...) asparagine glycans are attached at residues Asn-12 and Asn-17. 2 cysteine pairs are disulfide-bonded: Cys-21-Cys-253 and Cys-245-Cys-251. The helical transmembrane segment at 24–49 (VALPEEIFFIISITGVLENLIIILAV) threads the bilayer. The Cytoplasmic segment spans residues 50–58 (IKNKNLQFP). Residues 59–79 (MYFFICSLAISDMLGSLYKIL) form a helical membrane-spanning segment. Topologically, residues 80–104 (ESILIMFRNMGYFKPHGSFETTTDD) are extracellular. The chain crosses the membrane as a helical span at residues 105 to 126 (IIDTMFILSLLGSIFSLLAIAV). Over 127–147 (DRYITIFHALQYHSIVTMHRT) the chain is Cytoplasmic. A helical transmembrane segment spans residues 148–168 (IAVLSIIWTFCIGSGITMVLF). At 169 to 180 (SHHVPTVLTFTS) the chain is on the extracellular side. The chain crosses the membrane as a helical span at residues 181–199 (LFPLMLVFILCLYVHMFLM). Over 200–217 (ARSHARNISTLPRGNMRG) the chain is Cytoplasmic. Residues 218–244 (AITLTILLGVFIFCWAPFILHILLVTF) traverse the membrane as a helical segment. Topologically, residues 245–256 (CPNNPYCTCYIS) are extracellular. Residues 257–278 (LFHVNGMLIMCNAVIDPFIYAF) form a helical membrane-spanning segment. Over 279-297 (RSPELRSAFRRMISYSKCL) the chain is Cytoplasmic. Residue Cys-296 is the site of S-palmitoyl cysteine attachment.

Belongs to the G-protein coupled receptor 1 family. Homodimer. Interacts with corticotropin (ACTH). Interacts with MRAP; this interaction targets MC2R to the plasma membrane. Interacts with MRAP2; competing with MRAP for binding to MC2R and impairing the binding of corticotropin (ACTH). In terms of processing, ubiquitinated by MGRN1 that may be involved in post-endocytic trafficking and/or degradation of internalized receptor.

Its subcellular location is the cell membrane. Hormone receptor primarily expressed in adrenal cortex that plays a key role in regulating adrenocortical function. Upon corticotropin (ACTH) binding, facilitates the release of adrenal glucocorticoids, including cortisol and corticosterone. In addition, MC2R is required for fetal and neonatal adrenal gland development. Mechanistically, activates adenylate cyclase (cAMP), the MAPK cascade as well as the cAMP-dependent protein kinase A pathway leading to steroidogenic factor 1/NR5A1-mediated transcriptional activation. This chain is Adrenocorticotropic hormone receptor (MC2R), found in Cavia porcellus (Guinea pig).